Consider the following 344-residue polypeptide: tRNA N6-adenosine threonylcarbamoyltransferase (344 aa).

His-111 and His-115 together coordinate Fe cation. Residues 134–138 (LVSGG), Asp-167, Gly-180, and Asn-277 contribute to the substrate site. Asp-305 contacts Fe cation.

This sequence belongs to the KAE1 / TsaD family. The cofactor is Fe(2+).

Its subcellular location is the cytoplasm. It carries out the reaction L-threonylcarbamoyladenylate + adenosine(37) in tRNA = N(6)-L-threonylcarbamoyladenosine(37) in tRNA + AMP + H(+). Its function is as follows. Required for the formation of a threonylcarbamoyl group on adenosine at position 37 (t(6)A37) in tRNAs that read codons beginning with adenine. Is involved in the transfer of the threonylcarbamoyl moiety of threonylcarbamoyl-AMP (TC-AMP) to the N6 group of A37, together with TsaE and TsaB. TsaD likely plays a direct catalytic role in this reaction. In Glaesserella parasuis serovar 5 (strain SH0165) (Haemophilus parasuis), this protein is tRNA N6-adenosine threonylcarbamoyltransferase.